We begin with the raw amino-acid sequence, 332 residues long: Receptor polysaccharide phosphotransferase WefC (332 aa).

Belongs to the stealth family.

The sequence is that of Receptor polysaccharide phosphotransferase WefC (wefC) from Streptococcus oralis.